The sequence spans 222 residues: Small ribosomal subunit protein uS7m (222 aa).

The N-terminal 14 residues, 1–14, are a transit peptide targeting the mitochondrion; it reads MSKKLANFAQKRWI.

Belongs to the universal ribosomal protein uS7 family. Component of the mitochondrial ribosome small subunit (28S) which comprises a 12S rRNA and about 30 distinct proteins.

The protein resides in the mitochondrion. The polypeptide is Small ribosomal subunit protein uS7m (mrps-7) (Caenorhabditis briggsae).